The chain runs to 269 residues: Thiazole synthase (269 aa).

K109 functions as the Schiff-base intermediate with DXP in the catalytic mechanism. 1-deoxy-D-xylulose 5-phosphate-binding positions include G170, 196–197 (AG), and 218–219 (NT).

This sequence belongs to the ThiG family. In terms of assembly, homotetramer. Forms heterodimers with either ThiH or ThiS.

The protein resides in the plastid. It is found in the chloroplast. It catalyses the reaction [ThiS sulfur-carrier protein]-C-terminal-Gly-aminoethanethioate + 2-iminoacetate + 1-deoxy-D-xylulose 5-phosphate = [ThiS sulfur-carrier protein]-C-terminal Gly-Gly + 2-[(2R,5Z)-2-carboxy-4-methylthiazol-5(2H)-ylidene]ethyl phosphate + 2 H2O + H(+). It participates in cofactor biosynthesis; thiamine diphosphate biosynthesis. In terms of biological role, catalyzes the rearrangement of 1-deoxy-D-xylulose 5-phosphate (DXP) to produce the thiazole phosphate moiety of thiamine. Sulfur is provided by the thiocarboxylate moiety of the carrier protein ThiS. In vitro, sulfur can be provided by H(2)S. The protein is Thiazole synthase of Phaeodactylum tricornutum (strain CCAP 1055/1).